The following is a 44-amino-acid chain: Photosystem I reaction center subunit IX (44 aa).

A helical membrane pass occupies residues 7–27; the sequence is YLSVAPVLSTLWFGSLAGLLI.

The protein belongs to the PsaJ family.

Its subcellular location is the plastid. It localises to the chloroplast thylakoid membrane. Its function is as follows. May help in the organization of the PsaE and PsaF subunits. This is Photosystem I reaction center subunit IX from Lactuca sativa (Garden lettuce).